The primary structure comprises 137 residues: Histone H2B.4 (137 aa).

The segment covering 1 to 37 has biased composition (basic and acidic residues); it reads MAPKAEKKPAEKKPTEEKAEKKPRAEKRVPGKEGGEK. The interval 1-45 is disordered; that stretch reads MAPKAEKKPAEKKPTEEKAEKKPRAEKRVPGKEGGEKKGKKKAKK. Lys7 and Lys27 each carry N6-acetyllysine. Lys133 participates in a covalent cross-link: Glycyl lysine isopeptide (Lys-Gly) (interchain with G-Cter in ubiquitin).

It belongs to the histone H2B family. In terms of assembly, the nucleosome is a histone octamer containing two molecules each of H2A, H2B, H3 and H4 assembled in one H3-H4 heterotetramer and two H2A-H2B heterodimers. The octamer wraps approximately 147 bp of DNA. Can be acetylated to form H2BK6ac and H2BK33ac. In terms of processing, monoubiquitinated to form H2BK143ub1; may give a specific tag for epigenetic transcriptional activation.

It is found in the nucleus. The protein localises to the chromosome. Core component of nucleosome. Nucleosomes wrap and compact DNA into chromatin, limiting DNA accessibility to the cellular machineries which require DNA as a template. Histones thereby play a central role in transcription regulation, DNA repair, DNA replication and chromosomal stability. DNA accessibility is regulated via a complex set of post-translational modifications of histones, also called histone code, and nucleosome remodeling. In Zea mays (Maize), this protein is Histone H2B.4.